Reading from the N-terminus, the 853-residue chain is Histone-lysine N-methyltransferase PRDM9 (853 aa).

One can recognise an SET domain in the interval 83–197 (QGLVIGRSSI…PGQEFRVWYA (115 aa)). Substrate is bound by residues 127-133 (DSANSWV) and Tyr-196. The C2H2-type 1 zinc finger occupies 230-253 (CPCPFCHYSFPTLVYLHAHVKRTH). Position 235 (Cys-235) interacts with Zn(2+). 275 to 277 (TEV) serves as a coordination point for S-adenosyl-L-methionine. The segment covering 291–314 (QTQPVTESPQEQISTQNGQPIHQT) has biased composition (polar residues). The tract at residues 291-322 (QTQPVTESPQEQISTQNGQPIHQTENSDEPDA) is disordered. 3 C2H2-type zinc fingers span residues 337–360 (HACV…RTIH), 366–388 (YCCS…QHTH), and 405–428 (YPCT…KRHH). 341–342 (DC) provides a ligand contact to S-adenosyl-L-methionine. Zn(2+)-binding residues include Cys-407, Cys-410, His-423, and His-428. Residues 447–496 (EDHTEVCFDKQDPNYEPPSRGRKSTKNSLKGRGCPKKVAVGRPRGRPPKN) are disordered. The segment covering 450–459 (TEVCFDKQDP) has biased composition (basic and acidic residues). A C2H2-type 5; degenerate zinc finger spans residues 508-528 (PICTNCEQSFSDLETLKTHQC). Residues 547-569 (YICGECIRAFSNLDLLKAHECIQ) form a C2H2-type 6; degenerate zinc finger. 3 consecutive C2H2-type zinc fingers follow at residues 575–598 (YCCP…RTIH), 604–626 (YCCT…QQSH), and 644–666 (FPCA…IRRH). Residues 689–711 (HSCSQCCKSFSTIKGFKNHSCFK) form a C2H2-type 10; degenerate zinc finger. 5 consecutive C2H2-type zinc fingers follow at residues 717 to 739 (YLCP…QRIH), 745 to 767 (YTCS…LRTH), 773 to 795 (FLCS…EQKH), 801 to 823 (CQCP…QQLH), and 829 to 852 (FPCT…QKMH). Residues Cys-747, Cys-750, His-763, His-767, Cys-775, Cys-778, His-791, His-795, Cys-803, Cys-806, His-819, His-823, Cys-831, Cys-834, and His-847 each contribute to the Zn(2+) site. The DNA-binding stretch occupies residues 755-845 (VHSGQLNVHL…KSFTRRYHLT (91 aa)).

It belongs to the class V-like SAM-binding methyltransferase superfamily. As to quaternary structure, homodimer. In terms of processing, mono-methylated; automethylated. Tri-methylated; automethylated.

It localises to the nucleus. It is found in the chromosome. The enzyme catalyses L-lysyl-[protein] + S-adenosyl-L-methionine = N(6)-methyl-L-lysyl-[protein] + S-adenosyl-L-homocysteine + H(+). It carries out the reaction N(6)-methyl-L-lysyl-[protein] + S-adenosyl-L-methionine = N(6),N(6)-dimethyl-L-lysyl-[protein] + S-adenosyl-L-homocysteine + H(+). The catalysed reaction is L-lysyl(4)-[histone H3] + 3 S-adenosyl-L-methionine = N(6),N(6),N(6)-trimethyl-L-lysyl(4)-[histone H3] + 3 S-adenosyl-L-homocysteine + 3 H(+). It catalyses the reaction L-lysyl(36)-[histone H3] + 3 S-adenosyl-L-methionine = N(6),N(6),N(6)-trimethyl-L-lysyl(36)-[histone H3] + 3 S-adenosyl-L-homocysteine + 3 H(+). The enzyme catalyses L-lysyl(9)-[histone H3] + 3 S-adenosyl-L-methionine = N(6),N(6),N(6)-trimethyl-L-lysyl(9)-[histone H3] + 3 S-adenosyl-L-homocysteine + 3 H(+). It carries out the reaction L-lysyl(20)-[histone H4] + S-adenosyl-L-methionine = N(6)-methyl-L-lysyl(20)-[histone H4] + S-adenosyl-L-homocysteine + H(+). The catalysed reaction is N(6)-methyl-L-lysyl(20)-[histone H4] + S-adenosyl-L-methionine = N(6),N(6)-dimethyl-L-lysyl(20)-[histone H4] + S-adenosyl-L-homocysteine + H(+). Its function is as follows. Histone methyltransferase that sequentially mono-, di-, and tri-methylates both 'Lys-4' (H3K4) and 'Lys-36' (H3K36) of histone H3 to produce respectively trimethylated 'Lys-4' (H3K4me3) and trimethylated 'Lys-36' (H3K36me3) histone H3 and plays a key role in meiotic prophase by determining hotspot localization thereby promoting meiotic recombination. Can also methylate all four core histones with H3 being the best substrate and the most highly modified. Is also able, on one hand, to mono and di-methylate H4K20 and on other hand to trimethylate H3K9 with the di-methylated H3K9 as the best substrate. During meiotic prophase, binds specific DNA sequences through its zinc finger domains thereby determining hotspot localization where it promotes local H3K4me3 and H3K36me3 enrichment on the same nucleosomes through its histone methyltransferase activity. Thereby promotes double-stranded breaks (DSB) formation, at this subset of PRDM9-binding sites, that initiates meiotic recombination for the proper meiotic progression. During meiotic progression hotspot-bound PRDM9 interacts with several complexes; in early leptonema binds CDYL and EHMT2 followed by EWSR1 and CXXC1 by the end of leptonema. EWSR1 joins PRDM9 with the chromosomal axis through REC8. In this way, controls the DSB repair pathway, pairing of homologous chromosomes and sex body formation. Moreover plays a central role in the transcriptional activation of genes during early meiotic prophase thanks to H3K4me3 and H3K36me3 enrichment that represents a specific tag for epigenetic transcriptional activation. In addition performs automethylation. Acetylation and phosphorylation of histone H3 attenuate or prevent histone H3 methylation. In Danio rerio (Zebrafish), this protein is Histone-lysine N-methyltransferase PRDM9 (prdm9).